The primary structure comprises 544 residues: CTP synthase (544 aa).

The interval 1–265 (MTKFIFVTGG…DNIITEQLQL (265 aa)) is amidoligase domain. Position 13 (S13) interacts with CTP. Residue S13 coordinates UTP. ATP-binding positions include 14 to 19 (SLGKGI) and D71. Mg(2+) contacts are provided by D71 and E139. Residues 146-148 (DIE), 186-191 (KTKPTQ), and K222 each bind CTP. Residues 186–191 (KTKPTQ) and K222 contribute to the UTP site. Residues 290 to 544 (KIAMVGKYVD…VKAALNNKKA (255 aa)) enclose the Glutamine amidotransferase type-1 domain. G353 is an L-glutamine binding site. C380 serves as the catalytic Nucleophile; for glutamine hydrolysis. L-glutamine-binding positions include 381–384 (LGMQ), E404, and R471. Catalysis depends on residues H517 and E519.

Belongs to the CTP synthase family. Homotetramer.

It catalyses the reaction UTP + L-glutamine + ATP + H2O = CTP + L-glutamate + ADP + phosphate + 2 H(+). The catalysed reaction is L-glutamine + H2O = L-glutamate + NH4(+). It carries out the reaction UTP + NH4(+) + ATP = CTP + ADP + phosphate + 2 H(+). It participates in pyrimidine metabolism; CTP biosynthesis via de novo pathway; CTP from UDP: step 2/2. With respect to regulation, allosterically activated by GTP, when glutamine is the substrate; GTP has no effect on the reaction when ammonia is the substrate. The allosteric effector GTP functions by stabilizing the protein conformation that binds the tetrahedral intermediate(s) formed during glutamine hydrolysis. Inhibited by the product CTP, via allosteric rather than competitive inhibition. Its function is as follows. Catalyzes the ATP-dependent amination of UTP to CTP with either L-glutamine or ammonia as the source of nitrogen. Regulates intracellular CTP levels through interactions with the four ribonucleotide triphosphates. This is CTP synthase from Neisseria meningitidis serogroup A / serotype 4A (strain DSM 15465 / Z2491).